Reading from the N-terminus, the 511-residue chain is 2,3-bisphosphoglycerate-independent phosphoglycerate mutase (511 aa).

Aspartate 12 contributes to the Mn(2+) binding site. Residue tyrosine 36 is modified to Phosphotyrosine. Serine 62 lines the Mn(2+) pocket. Serine 62 acts as the Phosphoserine intermediate in catalysis. Residues histidine 123, 153-154 (RD), arginine 185, arginine 191, 261-264 (RPDR), and lysine 336 each bind substrate. Positions 403, 407, 444, 445, and 462 each coordinate Mn(2+).

The protein belongs to the BPG-independent phosphoglycerate mutase family. As to quaternary structure, monomer. Mn(2+) is required as a cofactor.

It catalyses the reaction (2R)-2-phosphoglycerate = (2R)-3-phosphoglycerate. Its pathway is carbohydrate degradation; glycolysis; pyruvate from D-glyceraldehyde 3-phosphate: step 3/5. Its function is as follows. Catalyzes the interconversion of 2-phosphoglycerate and 3-phosphoglycerate. This is 2,3-bisphosphoglycerate-independent phosphoglycerate mutase from Geobacillus kaustophilus (strain HTA426).